Here is a 91-residue protein sequence, read N- to C-terminus: Potassium channel toxin TtrKIK (91 aa).

The first 25 residues, 1 to 25, serve as a signal peptide directing secretion; the sequence is MVATNRCCVFALLFALLLVHSLTEA. Residues 26 to 44 constitute a propeptide that is removed on maturation; that stretch reads GKGKEVLGKIKDKLIEAKD. In terms of domain architecture, BetaSPN-type CS-alpha/beta spans 58–91; the sequence is EYACPAIEKFCEDHCAAKKAVGKCDDFKCNCIKL. Cystine bridges form between Cys61–Cys81, Cys68–Cys86, and Cys72–Cys88.

Belongs to the long chain scorpion toxin family. Class 2 subfamily. Expressed by the venom gland.

The protein localises to the secreted. Functionally, the full peptide presents antibacterial and cytotoxic activities. The synthetic C-terminus (AA 33-76) inhibits voltage-gated potassium channels Kv1.1/KCNA1, Kv1.2/KCNA2, and Kv1.3/KCNA3. This chain is Potassium channel toxin TtrKIK, found in Tityus trivittatus (Argentinean scorpion).